A 155-amino-acid polypeptide reads, in one-letter code: SsrA-binding protein (155 aa).

This sequence belongs to the SmpB family.

It is found in the cytoplasm. Its function is as follows. Required for rescue of stalled ribosomes mediated by trans-translation. Binds to transfer-messenger RNA (tmRNA), required for stable association of tmRNA with ribosomes. tmRNA and SmpB together mimic tRNA shape, replacing the anticodon stem-loop with SmpB. tmRNA is encoded by the ssrA gene; the 2 termini fold to resemble tRNA(Ala) and it encodes a 'tag peptide', a short internal open reading frame. During trans-translation Ala-aminoacylated tmRNA acts like a tRNA, entering the A-site of stalled ribosomes, displacing the stalled mRNA. The ribosome then switches to translate the ORF on the tmRNA; the nascent peptide is terminated with the 'tag peptide' encoded by the tmRNA and targeted for degradation. The ribosome is freed to recommence translation, which seems to be the essential function of trans-translation. The protein is SsrA-binding protein of Streptococcus pneumoniae serotype 4 (strain ATCC BAA-334 / TIGR4).